The primary structure comprises 336 residues: CMP-sialic acid transporter (336 aa).

Residues 1–9 lie on the Cytoplasmic side of the membrane; the sequence is MAPARENVS. The helical transmembrane segment at 10-30 threads the bilayer; it reads LFFKLYCLTVMTLVAAAYTVA. Residues 31-45 are Lumenal-facing; sequence LRYTRTTAEELYFST. The chain crosses the membrane as a helical span at residues 46 to 64; that stretch reads TAVCITEVIKLLISVGLLA. Lys-55 lines the CMP-N-acetyl-beta-neuraminate pocket. Topologically, residues 65–87 are cytoplasmic; that stretch reads KETGSLGRFKASLSENVLGSPKE. A helical membrane pass occupies residues 88-108; the sequence is LAKLSVPSLVYAVQNNMAFLA. A CMP-N-acetyl-beta-neuraminate-binding site is contributed by 101–102; sequence QN. Residues 109-114 lie on the Lumenal side of the membrane; the sequence is LSNLDA. Residues 115–135 traverse the membrane as a helical segment; sequence AVYQVTYQLKIPCTALCTVLM. 117 to 124 contributes to the CMP-N-acetyl-beta-neuraminate binding site; sequence YQVTYQLK. Residues 136-141 lie on the Cytoplasmic side of the membrane; that stretch reads LNRTLS. The chain crosses the membrane as a helical span at residues 142–160; that stretch reads KLQWISVFMLCGGVTLVQW. The Lumenal portion of the chain corresponds to 161 to 175; the sequence is KPAQATKVVVAQNPL. A helical transmembrane segment spans residues 176–196; that stretch reads LGFGAIAIAVLCSGFAGVYFE. Ser-188 contributes to the CMP-N-acetyl-beta-neuraminate binding site. Topologically, residues 197-209 are cytoplasmic; it reads KVLKSSDTSLWVR. 210 to 214 is a binding site for CMP-N-acetyl-beta-neuraminate; sequence NIQMY. Residues 210-228 traverse the membrane as a helical segment; sequence NIQMYLSGIVVTLAGTYLS. The Lumenal portion of the chain corresponds to 229–243; that stretch reads DGAEIQEKGFFYGYT. The chain crosses the membrane as a helical span at residues 244 to 262; that stretch reads YYVWFVIFLASVGGLYTSV. The Cytoplasmic portion of the chain corresponds to 263 to 269; sequence VVKYTDN. The helical transmembrane segment at 270-288 threads the bilayer; that stretch reads IMKGFSAAAAIVLSTIASV. Lys-272 contributes to the CMP-N-acetyl-beta-neuraminate binding site. Residues 289–296 lie on the Lumenal side of the membrane; sequence LLFGLQIT. A helical transmembrane segment spans residues 297-315; the sequence is LSFALGALLVCVSIYLYGL. Topologically, residues 316–336 are cytoplasmic; that stretch reads PRQDTTSIQQEATSKERIIGV. The segment at 316–336 is disordered; the sequence is PRQDTTSIQQEATSKERIIGV.

It belongs to the nucleotide-sugar transporter family. SLC35A subfamily. In terms of assembly, monomer. As to expression, ubiquitous. Found in all the tissues examined including skeletal muscle, brain, heart, liver, kidney and spleen.

It is found in the golgi apparatus membrane. The catalysed reaction is CMP-N-acetyl-beta-neuraminate(in) + CMP(out) = CMP-N-acetyl-beta-neuraminate(out) + CMP(in). It carries out the reaction CMP-N-acetyl-beta-neuraminate(in) + AMP(out) = CMP-N-acetyl-beta-neuraminate(out) + AMP(in). It catalyses the reaction CDP-L-ribitol(in) + CDP(out) = CDP-L-ribitol(out) + CDP(in). The enzyme catalyses UMP(out) + CMP-N-acetyl-beta-neuraminate(in) = UMP(in) + CMP-N-acetyl-beta-neuraminate(out). In terms of biological role, transports CMP-sialic acid from the cytosol into the Golgi apparatus, functioning as an antiporter that exchanges CMP-sialic acid for CMP. Binds both CMP-sialic acid and free CMP, but has higher affinity for free CMP. Also able to exchange CMP-sialic acid for AMP and UMP. Also mediates the transport of CDP-ribitol. The chain is CMP-sialic acid transporter from Mus musculus (Mouse).